The sequence spans 524 residues: Rho guanine nucleotide exchange factor 3 (524 aa).

Phosphoserine occurs at positions 46 and 69. The region spanning 121-303 (KRQEAIFELS…QGIVAEINTK (183 aa)) is the DH domain. The PH domain occupies 290 to 448 (INIIQGIVAE…WLNCIRQAKE (159 aa)). The interval 461–524 (DSEGLVQGPG…CANSRPEESV (64 aa)) is disordered. Basic and acidic residues predominate over residues 472 to 484 (ENREPQGETKLEQ).

In terms of assembly, interacts with RHOA and RHOB.

The protein localises to the cytoplasm. Acts as a guanine nucleotide exchange factor (GEF) for RhoA and RhoB GTPases. The sequence is that of Rho guanine nucleotide exchange factor 3 (Arhgef3) from Mus musculus (Mouse).